The primary structure comprises 287 residues: Putative syntaxin-4 (287 aa).

Topologically, residues 1-262 are cytoplasmic; the sequence is MHQISGINAA…NRKWKIVTCI (262 aa). Residues 65–97 are a coiled coil; that stretch reads KCRKLNDHVDKFIAQARGIRRRLADASEELVQY. Residues 184-246 enclose the t-SNARE coiled-coil homology domain; the sequence is FDDMKNRATD…EQAQQNVRQA (63 aa). A helical; Anchor for type IV membrane protein transmembrane segment spans residues 263 to 283; sequence ALIVLLLVVVYLLSHFLGAII. Residues 284 to 287 are Extracellular-facing; that stretch reads PGWK.

This sequence belongs to the syntaxin family.

The protein localises to the membrane. In terms of biological role, potentially involved in docking of synaptic vesicles at presynaptic active zones. This is Putative syntaxin-4 (syx-4) from Caenorhabditis elegans.